A 90-amino-acid polypeptide reads, in one-letter code: MARVTVQDAVEKVGNRFDLVLIAARRARQMQTGGKDALVPEENDKPTVIALREIEEGLITKEVLDARERQEQQEQEAAELAAVSSIAHNR.

Residues 69 to 90 form a disordered region; that stretch reads RQEQQEQEAAELAAVSSIAHNR.

The protein belongs to the RNA polymerase subunit omega family. In terms of assembly, the RNAP catalytic core consists of 2 alpha, 1 beta, 1 beta' and 1 omega subunit. When a sigma factor is associated with the core the holoenzyme is formed, which can initiate transcription.

It carries out the reaction RNA(n) + a ribonucleoside 5'-triphosphate = RNA(n+1) + diphosphate. In terms of biological role, promotes RNA polymerase assembly. Latches the N- and C-terminal regions of the beta' subunit thereby facilitating its interaction with the beta and alpha subunits. This is DNA-directed RNA polymerase subunit omega from Vibrio parahaemolyticus serotype O3:K6 (strain RIMD 2210633).